The primary structure comprises 295 residues: UDP-N-acetylenolpyruvoylglucosamine reductase (295 aa).

The FAD-binding PCMH-type domain maps to 23-188; that stretch reads KVGGPADFLA…ISAKFALKPG (166 aa). Residue Arg167 is part of the active site. Ser217 serves as the catalytic Proton donor. Glu287 is a catalytic residue.

Belongs to the MurB family. FAD is required as a cofactor.

It localises to the cytoplasm. It catalyses the reaction UDP-N-acetyl-alpha-D-muramate + NADP(+) = UDP-N-acetyl-3-O-(1-carboxyvinyl)-alpha-D-glucosamine + NADPH + H(+). Its pathway is cell wall biogenesis; peptidoglycan biosynthesis. In terms of biological role, cell wall formation. The polypeptide is UDP-N-acetylenolpyruvoylglucosamine reductase (Streptococcus pyogenes serotype M12 (strain MGAS9429)).